The following is a 440-amino-acid chain: ATP-dependent protease ATPase subunit HslU (440 aa).

ATP-binding positions include isoleucine 18 and 60–65 (GVGKTE). The interval 138-159 (RAQSFDQEDPSAGTRQKLRKKL) is disordered. 3 residues coordinate ATP: aspartate 252, glutamate 318, and arginine 390.

It belongs to the ClpX chaperone family. HslU subfamily. As to quaternary structure, a double ring-shaped homohexamer of HslV is capped on each side by a ring-shaped HslU homohexamer. The assembly of the HslU/HslV complex is dependent on binding of ATP.

The protein localises to the cytoplasm. ATPase subunit of a proteasome-like degradation complex; this subunit has chaperone activity. The binding of ATP and its subsequent hydrolysis by HslU are essential for unfolding of protein substrates subsequently hydrolyzed by HslV. HslU recognizes the N-terminal part of its protein substrates and unfolds these before they are guided to HslV for hydrolysis. This is ATP-dependent protease ATPase subunit HslU from Alkalilimnicola ehrlichii (strain ATCC BAA-1101 / DSM 17681 / MLHE-1).